The following is a 348-amino-acid chain: UDP-3-O-acylglucosamine N-acyltransferase (348 aa).

The active-site Proton acceptor is the H241.

The protein belongs to the transferase hexapeptide repeat family. LpxD subfamily. Homotrimer.

It carries out the reaction a UDP-3-O-[(3R)-3-hydroxyacyl]-alpha-D-glucosamine + a (3R)-hydroxyacyl-[ACP] = a UDP-2-N,3-O-bis[(3R)-3-hydroxyacyl]-alpha-D-glucosamine + holo-[ACP] + H(+). Its pathway is bacterial outer membrane biogenesis; LPS lipid A biosynthesis. In terms of biological role, catalyzes the N-acylation of UDP-3-O-acylglucosamine using 3-hydroxyacyl-ACP as the acyl donor. Is involved in the biosynthesis of lipid A, a phosphorylated glycolipid that anchors the lipopolysaccharide to the outer membrane of the cell. The chain is UDP-3-O-acylglucosamine N-acyltransferase from Neisseria meningitidis serogroup C / serotype 2a (strain ATCC 700532 / DSM 15464 / FAM18).